The chain runs to 269 residues: 4-hydroxy-tetrahydrodipicolinate reductase (269 aa).

Residues 11–16 and Glu37 contribute to the NAD(+) site; that span reads GASGRM. Arg38 lines the NADP(+) pocket. NAD(+) is bound by residues 101–103 and 125–128; these read GTT and AGNM. Residue His158 is the Proton donor/acceptor of the active site. A (S)-2,3,4,5-tetrahydrodipicolinate-binding site is contributed by His159. Catalysis depends on Lys162, which acts as the Proton donor. 168 to 169 contacts (S)-2,3,4,5-tetrahydrodipicolinate; the sequence is GT.

Belongs to the DapB family.

The protein resides in the cytoplasm. The enzyme catalyses (S)-2,3,4,5-tetrahydrodipicolinate + NAD(+) + H2O = (2S,4S)-4-hydroxy-2,3,4,5-tetrahydrodipicolinate + NADH + H(+). It carries out the reaction (S)-2,3,4,5-tetrahydrodipicolinate + NADP(+) + H2O = (2S,4S)-4-hydroxy-2,3,4,5-tetrahydrodipicolinate + NADPH + H(+). Its pathway is amino-acid biosynthesis; L-lysine biosynthesis via DAP pathway; (S)-tetrahydrodipicolinate from L-aspartate: step 4/4. In terms of biological role, catalyzes the conversion of 4-hydroxy-tetrahydrodipicolinate (HTPA) to tetrahydrodipicolinate. This chain is 4-hydroxy-tetrahydrodipicolinate reductase, found in Cereibacter sphaeroides (strain ATCC 17029 / ATH 2.4.9) (Rhodobacter sphaeroides).